Reading from the N-terminus, the 212-residue chain is MTTQKIVPTKSTDGSKLFRHQAKFVAGAMNINQIPNFSLPEIAFVGKSNVGKSSLINTICSNKNLAKVSNTPGRTRQINFFNLADKLIIVDLPGYGFANVPISVKEQWGVLISYYLRNSYNLRLVNLLIDSRRGIKENDKKVADLLLANKREFQIIFTKSDKVTDHKNLHDEAQNFLATLNYSCNVMYVSNRSKEGARELKASLAKCIKPQK.

The EngB-type G domain occupies 38-210 (SLPEIAFVGK…KASLAKCIKP (173 aa)). Residues 46–53 (GKSNVGKS), 73–77 (GRTRQ), 91–94 (DLPG), 158–161 (TKSD), and 189–191 (VSN) each bind GTP. Mg(2+)-binding residues include S53 and T75.

Belongs to the TRAFAC class TrmE-Era-EngA-EngB-Septin-like GTPase superfamily. EngB GTPase family. Mg(2+) serves as cofactor.

Functionally, necessary for normal cell division and for the maintenance of normal septation. The sequence is that of Probable GTP-binding protein EngB from Rickettsia africae (strain ESF-5).